The primary structure comprises 91 residues: Small ribosomal subunit protein uS19 (91 aa).

This sequence belongs to the universal ribosomal protein uS19 family.

In terms of biological role, protein S19 forms a complex with S13 that binds strongly to the 16S ribosomal RNA. This is Small ribosomal subunit protein uS19 from Cupriavidus taiwanensis (strain DSM 17343 / BCRC 17206 / CCUG 44338 / CIP 107171 / LMG 19424 / R1) (Ralstonia taiwanensis (strain LMG 19424)).